A 218-amino-acid polypeptide reads, in one-letter code: Ras-related protein Rab-27B (218 aa).

T2 bears the N-acetylthreonine mark. G16–T24 provides a ligand contact to GTP. Residues F38–F46 carry the Effector region motif. Residues D74 to Q78, N133 to D136, and S163 to A165 each bind GTP. A disulfide bridge connects residues C123 and C188. The interval I194–C218 is disordered. Positions D207–C218 are enriched in basic and acidic residues. Residues C216 and C218 are each lipidated (S-geranylgeranyl cysteine). Cysteine methyl ester is present on C218.

The protein belongs to the small GTPase superfamily. Rab family. Interacts with SYTL2, SYTL4, MYRIP and MLPH. Interacts with RPH3A and RPH3A. Interacts (GDP-bound form preferentially) with DENND10. Expressed primarily in testis.

The protein localises to the membrane. Its subcellular location is the late endosome. The catalysed reaction is GTP + H2O = GDP + phosphate + H(+). With respect to regulation, regulated by guanine nucleotide exchange factors (GEFs) which promote the exchange of bound GDP for free GTP, GTPase activating proteins (GAPs) which increase the GTP hydrolysis activity, and GDP dissociation inhibitors which inhibit the dissociation of the nucleotide from the GTPase. Activated by GEFs such as DENND10. In terms of biological role, small GTPase which cycles between active GTP-bound and inactive GDP-bound states. In its active state, binds to a variety of effector proteins to regulate homeostasis of late endocytic pathway, including endosomal positioning, maturation and secretion. Plays a role in NTRK2/TRKB axonal anterograde transport by facilitating the association of NTRK2/TRKB with KLC1. May be involved in targeting uroplakins to urothelial apical membranes. In Homo sapiens (Human), this protein is Ras-related protein Rab-27B (RAB27B).